Here is a 269-residue protein sequence, read N- to C-terminus: Aminoglycoside (3'') (9) adenylyltransferase (269 aa).

It catalyses the reaction streptomycin + ATP = 3''-O-adenylylstreptomycin + diphosphate. The catalysed reaction is spectinomycin + ATP = 9-O-adenylylspectinomycin + diphosphate. Its function is as follows. Mediates bacterial resistance to the antibiotic spectinomycin and probably also to streptomycin. This chain is Aminoglycoside (3'') (9) adenylyltransferase, found in Rhizobium radiobacter (Agrobacterium tumefaciens).